The primary structure comprises 311 residues: Porphobilinogen deaminase (311 aa).

Cysteine 242 carries the S-(dipyrrolylmethanemethyl)cysteine modification.

The protein belongs to the HMBS family. As to quaternary structure, monomer. Dipyrromethane is required as a cofactor.

The enzyme catalyses 4 porphobilinogen + H2O = hydroxymethylbilane + 4 NH4(+). The protein operates within porphyrin-containing compound metabolism; protoporphyrin-IX biosynthesis; coproporphyrinogen-III from 5-aminolevulinate: step 2/4. Functionally, tetrapolymerization of the monopyrrole PBG into the hydroxymethylbilane pre-uroporphyrinogen in several discrete steps. The sequence is that of Porphobilinogen deaminase (hemC) from Vibrio cholerae serotype O1 (strain ATCC 39315 / El Tor Inaba N16961).